The primary structure comprises 188 residues: dCTP deaminase (188 aa).

Residues 111–116, 135–137, Gln-156, Tyr-170, and Gln-180 each bind dCTP; these read KSTYAR and TLE. Glu-137 (proton donor/acceptor) is an active-site residue.

It belongs to the dCTP deaminase family. As to quaternary structure, homotrimer.

The catalysed reaction is dCTP + H2O + H(+) = dUTP + NH4(+). It functions in the pathway pyrimidine metabolism; dUMP biosynthesis; dUMP from dCTP (dUTP route): step 1/2. Functionally, catalyzes the deamination of dCTP to dUTP. The sequence is that of dCTP deaminase from Acidithiobacillus ferrooxidans (strain ATCC 23270 / DSM 14882 / CIP 104768 / NCIMB 8455) (Ferrobacillus ferrooxidans (strain ATCC 23270)).